Here is a 282-residue protein sequence, read N- to C-terminus: MLRAASSLFRFRVAGMVALSCVFGYLLAAGAAGPDMVTSAAGTFLLTCACSVFNQIQEKDLDARMPRTRNRPVASGRLPTTAARAVGMAALLPALILLHAAGGVRLVLLSAAVLALYNGVYTPMKKYTAFSLLAGAVPGALPPVFGWLAAGGNLYSPEIALLFIVYYLWQVPHFWLRAERDRQSYLAAGLPLPSVELPHRYHALLRLWYASYMVALLLLPVFPFIAETAVRIAVCLAGITGLAASGYLLASPVRGFHAVNVSMLFVMLLLVVDRLVTSGIIT.

Transmembrane regions (helical) follow at residues 13 to 33 (VAGMVALSCVFGYLLAAGAAG), 36 to 56 (MVTSAAGTFLLTCACSVFNQI), 74 to 96 (ASGRLPTTAARAVGMAALLPALI), 101 to 120 (AGGVRLVLLSAAVLALYNGV), 129 to 149 (AFSLLAGAVPGALPPVFGWLA), 156 to 176 (SPEIALLFIVYYLWQVPHFWL), 207 to 227 (LWYASYMVALLLLPVFPFIAE), 232 to 252 (IAVCLAGITGLAASGYLLASP), and 261 to 281 (VSMLFVMLLLVVDRLVTSGII).

The protein belongs to the UbiA prenyltransferase family. Protoheme IX farnesyltransferase subfamily.

The protein resides in the cell inner membrane. It catalyses the reaction heme b + (2E,6E)-farnesyl diphosphate + H2O = Fe(II)-heme o + diphosphate. Its pathway is porphyrin-containing compound metabolism; heme O biosynthesis; heme O from protoheme: step 1/1. In terms of biological role, converts heme B (protoheme IX) to heme O by substitution of the vinyl group on carbon 2 of heme B porphyrin ring with a hydroxyethyl farnesyl side group. The sequence is that of Protoheme IX farnesyltransferase from Oleidesulfovibrio alaskensis (strain ATCC BAA-1058 / DSM 17464 / G20) (Desulfovibrio alaskensis).